The sequence spans 394 residues: Phenylalanine 4-monooxygenase, chloroplastic (394 aa).

Residues 1-79 constitute a chloroplast transit peptide; it reads MAMEVGYLRH…LNQIQAVSTA (79 aa). The interval 75–97 is disordered; the sequence is AVSTAEKEREADKTSTPPIPSSI. Fe cation is bound by residues His252, His257, and Glu297.

Belongs to the biopterin-dependent aromatic amino acid hydroxylase family. As to quaternary structure, forms monomers. It depends on Fe(2+) as a cofactor.

Its subcellular location is the plastid. The protein localises to the chloroplast. The enzyme catalyses (6R)-L-erythro-5,6,7,8-tetrahydrobiopterin + L-phenylalanine + O2 = (4aS,6R)-4a-hydroxy-L-erythro-5,6,7,8-tetrahydrobiopterin + L-tyrosine. Functionally, catalyzes the hydroxylation of L-phenylalanine to L-tyrosine. Does not seem to be tetrahydropterin-dependent and shows preference for 10-formyltetrahydrofolate as cosubstrate and electron donor. The protein is Phenylalanine 4-monooxygenase, chloroplastic of Physcomitrium patens (Spreading-leaved earth moss).